The chain runs to 140 residues: 3-hydroxyacyl-[acyl-carrier-protein] dehydratase FabZ (140 aa).

Histidine 47 is a catalytic residue.

It belongs to the thioester dehydratase family. FabZ subfamily.

The protein localises to the cytoplasm. It catalyses the reaction a (3R)-hydroxyacyl-[ACP] = a (2E)-enoyl-[ACP] + H2O. In terms of biological role, involved in unsaturated fatty acids biosynthesis. Catalyzes the dehydration of short chain beta-hydroxyacyl-ACPs and long chain saturated and unsaturated beta-hydroxyacyl-ACPs. The polypeptide is 3-hydroxyacyl-[acyl-carrier-protein] dehydratase FabZ (Streptococcus uberis (strain ATCC BAA-854 / 0140J)).